The chain runs to 330 residues: Syntaxin-121 (330 aa).

A compositionally biased stretch (polar residues) spans Met-1 to Lys-10. Positions Met-1–Gly-39 are disordered. The Cytoplasmic portion of the chain corresponds to Met-1–Trp-284. Residues Thr-12–Val-28 are compositionally biased toward gly residues. The t-SNARE coiled-coil homology domain occupies Val-212–Ala-274. A helical; Anchor for type IV membrane protein transmembrane segment spans residues Thr-285–Leu-305. The Vesicular portion of the chain corresponds to Lys-306 to Ala-330. Positions Asn-311 to Ala-330 are disordered. The segment covering Pro-320 to Ala-330 has biased composition (pro residues).

This sequence belongs to the syntaxin family. Interacts with SNAP32. As to expression, expressed in roots, stems, leaf blades and leaf sheaths.

The protein localises to the cell membrane. In terms of biological role, vesicle trafficking protein that functions in the secretory pathway. Involved in plant defense by mediating host resistance to the rice blast fungus Magnaporthe oryzae. The interaction with SNAP32 may contribute to host resistance to the rice blast fungus. In Oryza sativa subsp. japonica (Rice), this protein is Syntaxin-121.